Consider the following 95-residue polypeptide: PIK3R3 upstream open reading frame protein (95 aa).

Residues methionine 1–proline 27 are disordered.

The sequence is that of PIK3R3 upstream open reading frame protein from Homo sapiens (Human).